The chain runs to 106 residues: Large ribosomal subunit protein eL34 (106 aa).

This sequence belongs to the eukaryotic ribosomal protein eL34 family.

This Hyperthermus butylicus (strain DSM 5456 / JCM 9403 / PLM1-5) protein is Large ribosomal subunit protein eL34.